Consider the following 675-residue polypeptide: Potassium-transporting ATPase ATP-binding subunit 2 (675 aa).

The next 4 helical transmembrane spans lie at 34–54, 65–85, 216–236, and 245–265; these read IMFV…FPDI, LITI…SEAF, IALF…IVTL, and LILP…TTIG. D304 functions as the 4-aspartylphosphate intermediate in the catalytic mechanism. Residues D341, E345, 372–379, and K390 contribute to the ATP site; that span reads FTAETRMS. Residues D513 and D517 each contribute to the Mg(2+) site. A run of 3 helical transmembrane segments spans residues 569–591, 611–631, and 644–664; these read ALTT…ALMM, AIIS…PIAM, and IFIN…FLGI.

It belongs to the cation transport ATPase (P-type) (TC 3.A.3) family. Type IA subfamily. As to quaternary structure, the system is composed of three essential subunits: KdpA, KdpB and KdpC.

The protein localises to the cell membrane. It catalyses the reaction K(+)(out) + ATP + H2O = K(+)(in) + ADP + phosphate + H(+). Part of the high-affinity ATP-driven potassium transport (or Kdp) system, which catalyzes the hydrolysis of ATP coupled with the electrogenic transport of potassium into the cytoplasm. This subunit is responsible for energy coupling to the transport system and for the release of the potassium ions to the cytoplasm. This chain is Potassium-transporting ATPase ATP-binding subunit 2, found in Staphylococcus aureus (strain Mu50 / ATCC 700699).